The following is a 235-amino-acid chain: tRNA (guanine-N(1)-)-methyltransferase (235 aa).

S-adenosyl-L-methionine-binding positions include Gly112 and 132 to 137 (LGDFVL).

This sequence belongs to the RNA methyltransferase TrmD family. In terms of assembly, homodimer.

It localises to the cytoplasm. It catalyses the reaction guanosine(37) in tRNA + S-adenosyl-L-methionine = N(1)-methylguanosine(37) in tRNA + S-adenosyl-L-homocysteine + H(+). Functionally, specifically methylates guanosine-37 in various tRNAs. This is tRNA (guanine-N(1)-)-methyltransferase from Acaryochloris marina (strain MBIC 11017).